The sequence spans 345 residues: Altered inheritance of mitochondria protein 39, mitochondrial (345 aa).

Residues 1–29 constitute a mitochondrion transit peptide; the sequence is MLSLRRGLITKSYLNYKFVNHLAVIPRNY. The interval 46–91 is disordered; the sequence is NDKGSYADSKHFFTKPNGKMNSNEQIDQMHNNGSNNPNNNKNGSTD. A compositionally biased stretch (polar residues) spans 64-75; the sequence is KMNSNEQIDQMH. Low complexity predominate over residues 76 to 89; the sequence is NNGSNNPNNNKNGS. A helical transmembrane segment spans residues 113 to 133; the sequence is LGISIFAVLIGYSIGYKVIYL.

The protein belongs to the AIM39 family.

Its subcellular location is the mitochondrion membrane. This Vanderwaltozyma polyspora (strain ATCC 22028 / DSM 70294 / BCRC 21397 / CBS 2163 / NBRC 10782 / NRRL Y-8283 / UCD 57-17) (Kluyveromyces polysporus) protein is Altered inheritance of mitochondria protein 39, mitochondrial (AIM39).